The sequence spans 565 residues: NAD-dependent malic enzyme (565 aa).

Catalysis depends on tyrosine 104, which acts as the Proton donor. An NAD(+)-binding site is contributed by arginine 157. The active-site Proton acceptor is lysine 175. A divalent metal cation is bound by residues glutamate 246, aspartate 247, and aspartate 270. The NAD(+) site is built by aspartate 270 and asparagine 418.

This sequence belongs to the malic enzymes family. In terms of assembly, homotetramer. The cofactor is Mg(2+). Requires Mn(2+) as cofactor.

The catalysed reaction is (S)-malate + NAD(+) = pyruvate + CO2 + NADH. The enzyme catalyses oxaloacetate + H(+) = pyruvate + CO2. This is NAD-dependent malic enzyme from Shigella boydii serotype 18 (strain CDC 3083-94 / BS512).